Consider the following 351-residue polypeptide: UDP-3-O-acylglucosamine N-acyltransferase (351 aa).

Catalysis depends on histidine 257, which acts as the Proton acceptor.

This sequence belongs to the transferase hexapeptide repeat family. LpxD subfamily. Homotrimer.

The catalysed reaction is a UDP-3-O-[(3R)-3-hydroxyacyl]-alpha-D-glucosamine + a (3R)-hydroxyacyl-[ACP] = a UDP-2-N,3-O-bis[(3R)-3-hydroxyacyl]-alpha-D-glucosamine + holo-[ACP] + H(+). The protein operates within bacterial outer membrane biogenesis; LPS lipid A biosynthesis. Functionally, catalyzes the N-acylation of UDP-3-O-acylglucosamine using 3-hydroxyacyl-ACP as the acyl donor. Is involved in the biosynthesis of lipid A, a phosphorylated glycolipid that anchors the lipopolysaccharide to the outer membrane of the cell. The chain is UDP-3-O-acylglucosamine N-acyltransferase from Methylorubrum extorquens (strain PA1) (Methylobacterium extorquens).